Consider the following 448-residue polypeptide: Clusterin (448 aa).

The signal sequence occupies residues 1–21 (MKILLLCVALLLIWDNGMVLG). The Nuclear localization signal signature appears at 77–80 (KKKK). Intrachain disulfides connect cysteine 101-cysteine 312, cysteine 112-cysteine 304, cysteine 115-cysteine 301, cysteine 120-cysteine 294, and cysteine 128-cysteine 284. N-linked (GlcNAc...) asparagine glycosylation occurs at asparagine 102. Phosphoserine is present on serine 132. N-linked (GlcNAc...) asparagine glycosylation is found at asparagine 144, asparagine 290, asparagine 327, asparagine 353, and asparagine 373. At serine 395 the chain carries Phosphoserine. Positions 442-446 (RRKSR) match the Nuclear localization signal motif.

This sequence belongs to the clusterin family. As to quaternary structure, antiparallel disulfide-linked heterodimer of an alpha chain and a beta chain. Self-associates and forms higher oligomers. Interacts with a broad range of misfolded proteins, including APP, APOC2 and LYZ. Slightly acidic pH promotes interaction with misfolded proteins. Forms high-molecular weight oligomers upon interaction with misfolded proteins. Interacts with APOA1, LRP2, CLUAP1 and PON1. Interacts with the complement membrane attack complex. Interacts (via alpha chain) with XRCC6. Interacts with SYVN1, COMMD1, BTRC, CUL1 and with ubiquitin and SCF (SKP1-CUL1-F-box protein) E3 ubiquitin-protein ligase complexes. Interacts (via alpha chain) with BAX in stressed cells, where BAX undergoes a conformation change leading to association with the mitochondrial membrane. Does not interact with BAX in unstressed cells. Found in a complex with LTF, CLU, EPPIN and SEMG1. Interacts (immaturely glycosylated pre-secreted form) with HSPA5; this interaction promotes CLU stability and facilitates stress-induced CLU retrotranslocation from the secretory pathway to the mitochondria, thereby reducing stress-induced apoptosis by stabilizing mitochondrial membrane integrity. Interacts with BCL2L1; this interaction releases and activates BAX and promotes cell death. Interacts with TGFBR2 and ACVR1. Interacts (secreted form) with STMN3; this interaction may act as an important modulator during neuronal differentiation. Interacts with VLDLR and LRP8. Post-translationally, proteolytically cleaved on its way through the secretory system, probably within the Golgi lumen. Proteolytic cleavage is not necessary for its chaperone activity. All non-secreted forms are not proteolytically cleaved. Chaperone activity of uncleaved forms is dependent on a non-reducing environment. Polyubiquitinated, leading to proteasomal degradation. Under cellular stress, the intracellular level of cleaved form is reduced due to proteasomal degradation. In terms of processing, extensively glycosylated with sulfated N-linked carbohydrates. About 30% of the protein mass is comprised of complex N-linked carbohydrate. Endoplasmic reticulum (ER) stress induces changes in glycosylation status and increases level of hypoglycosylated forms. Core carbohydrates are essential for chaperone activity. Non-secreted forms are hypoglycosylated or unglycosylated. In terms of tissue distribution, most abundant in stomach, liver, brain, and testis, with intermediate levels in heart, ovary and kidney.

Its subcellular location is the secreted. The protein localises to the nucleus. It localises to the cytoplasm. The protein resides in the mitochondrion membrane. It is found in the cytosol. Its subcellular location is the microsome. The protein localises to the endoplasmic reticulum. It localises to the mitochondrion. The protein resides in the perinuclear region. It is found in the cytoplasmic vesicle. Its subcellular location is the secretory vesicle. The protein localises to the chromaffin granule. Functionally, functions as extracellular chaperone that prevents aggregation of non native proteins. Prevents stress-induced aggregation of blood plasma proteins. Inhibits formation of amyloid fibrils by APP, APOC2, B2M, CALCA, CSN3, SNCA and aggregation-prone LYZ variants (in vitro). Does not require ATP. Maintains partially unfolded proteins in a state appropriate for subsequent refolding by other chaperones, such as HSPA8/HSC70. Does not refold proteins by itself. Binding to cell surface receptors triggers internalization of the chaperone-client complex and subsequent lysosomal or proteasomal degradation. When secreted, protects cells against apoptosis and against cytolysis by complement: inhibits assembly of the complement membrane attack complex (MAC) by preventing polymerization of C9 pore component of the MAC complex. Intracellular forms interact with ubiquitin and SCF (SKP1-CUL1-F-box protein) E3 ubiquitin-protein ligase complexes and promote the ubiquitination and subsequent proteasomal degradation of target proteins. Promotes proteasomal degradation of COMMD1 and IKBKB. Modulates NF-kappa-B transcriptional activity. Following stress, promotes apoptosis. Inhibits apoptosis when associated with the mitochondrial membrane by interference with BAX-dependent release of cytochrome c into the cytoplasm. Plays a role in the regulation of cell proliferation. Following ER stress, suppresses stress-induced apoptosis by stabilizing mitochondrial membrane integrity through interaction with HSPA5. When secreted, does not affect caspase or BAX-mediated intrinsic apoptosis and TNF-induced NF-kappa-B-activity. When secreted, acts as an important modulator during neuronal differentiation through interaction with STMN3. Plays a role in the clearance of immune complexes that arise during cell injury. This is Clusterin from Mus musculus (Mouse).